We begin with the raw amino-acid sequence, 208 residues long: Ribosomal RNA large subunit methyltransferase E (208 aa).

Positions 63, 65, 83, 99, and 124 each coordinate S-adenosyl-L-methionine. Residue lysine 164 is the Proton acceptor of the active site.

This sequence belongs to the class I-like SAM-binding methyltransferase superfamily. RNA methyltransferase RlmE family.

It localises to the cytoplasm. It carries out the reaction uridine(2552) in 23S rRNA + S-adenosyl-L-methionine = 2'-O-methyluridine(2552) in 23S rRNA + S-adenosyl-L-homocysteine + H(+). Its function is as follows. Specifically methylates the uridine in position 2552 of 23S rRNA at the 2'-O position of the ribose in the fully assembled 50S ribosomal subunit. This chain is Ribosomal RNA large subunit methyltransferase E, found in Salmonella arizonae (strain ATCC BAA-731 / CDC346-86 / RSK2980).